The primary structure comprises 192 residues: Orotate phosphoribosyltransferase (192 aa).

116–124 (EDVVTTGKS) lines the 5-phospho-alpha-D-ribose 1-diphosphate pocket. Positions 120 and 148 each coordinate orotate.

Belongs to the purine/pyrimidine phosphoribosyltransferase family. PyrE subfamily. In terms of assembly, homodimer. It depends on Mg(2+) as a cofactor.

It carries out the reaction orotidine 5'-phosphate + diphosphate = orotate + 5-phospho-alpha-D-ribose 1-diphosphate. The protein operates within pyrimidine metabolism; UMP biosynthesis via de novo pathway; UMP from orotate: step 1/2. Catalyzes the transfer of a ribosyl phosphate group from 5-phosphoribose 1-diphosphate to orotate, leading to the formation of orotidine monophosphate (OMP). This chain is Orotate phosphoribosyltransferase, found in Clostridium perfringens (strain ATCC 13124 / DSM 756 / JCM 1290 / NCIMB 6125 / NCTC 8237 / Type A).